A 245-amino-acid chain; its full sequence is Enolase-phosphatase E1 (245 aa).

Belongs to the HAD-like hydrolase superfamily. MasA/MtnC family. In terms of assembly, monomer. It depends on Mg(2+) as a cofactor.

It carries out the reaction 5-methylsulfanyl-2,3-dioxopentyl phosphate + H2O = 1,2-dihydroxy-5-(methylsulfanyl)pent-1-en-3-one + phosphate. The protein operates within amino-acid biosynthesis; L-methionine biosynthesis via salvage pathway; L-methionine from S-methyl-5-thio-alpha-D-ribose 1-phosphate: step 3/6. It participates in amino-acid biosynthesis; L-methionine biosynthesis via salvage pathway; L-methionine from S-methyl-5-thio-alpha-D-ribose 1-phosphate: step 4/6. In terms of biological role, bifunctional enzyme that catalyzes the enolization of 2,3-diketo-5-methylthiopentyl-1-phosphate (DK-MTP-1-P) into the intermediate 2-hydroxy-3-keto-5-methylthiopentenyl-1-phosphate (HK-MTPenyl-1-P), which is then dephosphorylated to form the acireductone 1,2-dihydroxy-3-keto-5-methylthiopentene (DHK-MTPene). In Synechococcus sp. (strain CC9902), this protein is Enolase-phosphatase E1.